The primary structure comprises 303 residues: MTCCAGCGSAARPARMAWRSGRCARTGRLRAGLRKAPMALTLGANHSGKSMYQRNLIKGLAQLPVALVGIDCKRGVEQAAFAPRLSALVTTPDDAASLLGVLVAEMEGRFDLLSRHGVSDLWELPAEVRPVPVVVLVDEVAELFLISSKKDEERRERIVTALIRLAQMARAIGIHLEICGQRFGSDLGKGATMLRAQLTGRVVHRVNDKQTAEMGLADVAPDAVPAASLIPMNRPGTAVAADPSGGWSKIRTPETSRDEVVAVCREFAHLIPDLPFLEPFRPRVPAEVPAAGPSMVKPRPLTE.

The 188-residue stretch at 26 to 213 folds into the FtsK domain; sequence TGRLRAGLRK…HRVNDKQTAE (188 aa). 43 to 50 is an ATP binding site; sequence GANHSGKS.

Functionally, involved in sporulation inhibition and pock formation. The chain is Sporulation regulatory protein (spi) from Streptomyces azureus.